The chain runs to 172 residues: Peroxiredoxin AHP1 (172 aa).

Positions 4-171 (LQPGDSFPAN…VLTVLGNQGK (168 aa)) constitute a Thioredoxin domain. Lys-44 participates in a covalent cross-link: Glycyl lysine isopeptide (Lys-Gly) (interchain with G-Cter in URM1). Cys-60 acts as the Cysteine sulfenic acid (-SOH) intermediate in catalysis. Position 60 is a cysteine persulfide (Cys-60). Residues Lys-63, Lys-99, Lys-141, Lys-156, and Lys-171 each participate in a glycyl lysine isopeptide (Lys-Gly) (interchain with G-Cter in URM1) cross-link.

It belongs to the peroxiredoxin family. Prx5 subfamily. Homodimer; disulfide-linked, upon oxidation. In terms of processing, conjugated to URM1, a ubiquitin-like protein, in response to oxidative stresses. The attachment of URM1 to lysine residues exclusively depends on the presence of a peroxidatic cysteine in the target protein, with low specificity for the particular residue, motif, or structural context at which urmylation can occur. The URM1-conjugation reaction is mechanistically and directly coupled to the process of cysteine persulfidation, transfering the sulfur atom of the URM1 thiocarboxyl group to redox-active cysteine residues in the target protein if it is exposed to oxidative conditions. Persulfidated on specific redox-active cysteine residues. Persulfidation (also called protein S-sulfhydration) may provide a molecular mechanism that enables cells to protect vulnerable cysteine residues from reactive oxygen species (ROS) under stress conditions.

The protein resides in the cytoplasm. It catalyses the reaction a hydroperoxide + [thioredoxin]-dithiol = an alcohol + [thioredoxin]-disulfide + H2O. In terms of biological role, thiol-specific peroxidase that catalyzes the reduction of hydrogen peroxide and organic hydroperoxides to water and alcohols, respectively. Plays a role in cell protection against oxidative stress by detoxifying peroxides and as sensor of hydrogen peroxide-mediated signaling events. Preferentially eliminates organic peroxides rather than hydrogen peroxide. Relays alkyl hydroperoxides as a signal to the transcription factor CAD1/YAP2 by inducing the formation of intramolecular disulfide bonds in CAD1, which causes its nuclear accumulation and activation. Involved in cellular Mn(2+) homeostasis. This is Peroxiredoxin AHP1 (AHP1) from Chaetomium thermophilum (strain DSM 1495 / CBS 144.50 / IMI 039719) (Thermochaetoides thermophila).